The primary structure comprises 188 residues: RWD domain-containing protein 4 (188 aa).

Residues 9 to 111 enclose the RWD domain; the sequence is MELEALRSIY…EYAKDNKEQF (103 aa). Residues 132–167 form a disordered region; it reads TPSAAPSSKKKDKKEQLSKAQKRKLADKTDHKGELP. The span at 155-166 shows a compositional bias: basic and acidic residues; that stretch reads KLADKTDHKGEL.

The chain is RWD domain-containing protein 4 (Rwdd4) from Rattus norvegicus (Rat).